A 113-amino-acid chain; its full sequence is Hydrogenase maturation factor HypA (113 aa).

Residue His2 coordinates Ni(2+). Positions 73, 76, 89, and 92 each coordinate Zn(2+).

Belongs to the HypA/HybF family.

Involved in the maturation of [NiFe] hydrogenases. Required for nickel insertion into the metal center of the hydrogenase. In Actinobacillus succinogenes (strain ATCC 55618 / DSM 22257 / CCUG 43843 / 130Z), this protein is Hydrogenase maturation factor HypA.